Here is a 162-residue protein sequence, read N- to C-terminus: Protein cornichon homolog 2 (162 aa).

At 1–10 the chain is on the cytoplasmic side; the sequence is MAFTFAAFCY. The chain crosses the membrane as a helical span at residues 11-31; sequence MLTLVLCASLIFFIIWHIIAF. At 32–72 the chain is on the lumenal side; it reads DELRTDFKNPIEQGNPSRARERVKNVERICCLLRKLVVPEY. The helical transmembrane segment at 73–93 threads the bilayer; it reads CIHGLFCLMFMCAAEWVTLGL. The Cytoplasmic portion of the chain corresponds to 94-138; sequence NIPLLFYHLWRYFHRPADGSEVMFDPVSIMNVDILNYCQKEAWCK. A helical membrane pass occupies residues 139–161; that stretch reads LAFYLLSFFYYLYRVGATVRYVS. A topological domain (lumenal) is located at residue Ala-162.

It belongs to the cornichon family.

Its subcellular location is the membrane. Functionally, regulates the trafficking and gating properties of AMPA-selective glutamate receptors (AMPARs). This chain is Protein cornichon homolog 2 (cnih2), found in Xenopus tropicalis (Western clawed frog).